Reading from the N-terminus, the 100-residue chain is Integration host factor subunit alpha (100 aa).

Positions Phe53–Ile72 are disordered.

This sequence belongs to the bacterial histone-like protein family. As to quaternary structure, heterodimer of an alpha and a beta chain.

In terms of biological role, this protein is one of the two subunits of integration host factor, a specific DNA-binding protein that functions in genetic recombination as well as in transcriptional and translational control. This is Integration host factor subunit alpha from Pseudomonas putida (strain ATCC 700007 / DSM 6899 / JCM 31910 / BCRC 17059 / LMG 24140 / F1).